The following is a 343-amino-acid chain: Probable dual-specificity RNA methyltransferase RlmN (343 aa).

The Proton acceptor role is filled by glutamate 93. Positions 99–320 (TDDRATLCVS…NAKGVVCTIR (222 aa)) constitute a Radical SAM core domain. A disulfide bridge links cysteine 106 with cysteine 331. 3 residues coordinate [4Fe-4S] cluster: cysteine 113, cysteine 117, and cysteine 120. S-adenosyl-L-methionine is bound by residues 158–159 (GE), serine 190, 212–214 (SLH), and histidine 288. The S-methylcysteine intermediate role is filled by cysteine 331.

Belongs to the radical SAM superfamily. RlmN family. It depends on [4Fe-4S] cluster as a cofactor.

It is found in the cytoplasm. It carries out the reaction adenosine(2503) in 23S rRNA + 2 reduced [2Fe-2S]-[ferredoxin] + 2 S-adenosyl-L-methionine = 2-methyladenosine(2503) in 23S rRNA + 5'-deoxyadenosine + L-methionine + 2 oxidized [2Fe-2S]-[ferredoxin] + S-adenosyl-L-homocysteine. The enzyme catalyses adenosine(37) in tRNA + 2 reduced [2Fe-2S]-[ferredoxin] + 2 S-adenosyl-L-methionine = 2-methyladenosine(37) in tRNA + 5'-deoxyadenosine + L-methionine + 2 oxidized [2Fe-2S]-[ferredoxin] + S-adenosyl-L-homocysteine. Functionally, specifically methylates position 2 of adenine 2503 in 23S rRNA and position 2 of adenine 37 in tRNAs. This chain is Probable dual-specificity RNA methyltransferase RlmN, found in Parabacteroides distasonis (strain ATCC 8503 / DSM 20701 / CIP 104284 / JCM 5825 / NCTC 11152).